The primary structure comprises 1012 residues: RAS protein activator like-3 (1012 aa).

3 disordered regions span residues 1–128 (MDPP…TPDV), 147–196 (GNED…QIHN), and 208–229 (KKAKSELGASASRDGPPSALGS). The segment covering 7–21 (SRASQTQPVAPSPLT) has biased composition (polar residues). S18 carries the post-translational modification Phosphoserine. Gly residues predominate over residues 27–39 (SGGGAEKGAGGFR). Over residues 50-62 (QSHQETTASSQPA) the composition is skewed to polar residues. Phosphoserine is present on S51. Residues 100–113 (SEPEPENPEPEPEL) are compositionally biased toward acidic residues. 4 positions are modified to phosphoserine: S160, S162, S163, and S166. Over residues 160-171 (SASSESSIHVAS) the composition is skewed to low complexity. A compositionally biased stretch (basic and acidic residues) spans 175 to 186 (KDPDRTPGKTDP). Positions 193–294 (QIHNVRGLLK…WIEDLRRHFQ (102 aa)) constitute a PH domain. Residues S212, S225, S229, and S232 each carry the phosphoserine modification. Residue T235 is modified to Phosphothreonine. One can recognise a C2 domain in the interval 285–405 (WIEDLRRHFQ…APAAGLERWF (121 aa)). Residues 475-683 (GRAQALVTDL…PAMQHFLDQV (209 aa)) form the Ras-GAP domain. The interval 752 to 887 (PAPRTQGHSS…DKDQALGTHR (136 aa)) is disordered. A phosphoserine mark is found at S788 and S791. Residues 826–841 (PARRRPSAGPRPRPKG) show a composition bias toward basic residues. A coiled-coil region spans residues 889 to 989 (VGKLAELQCE…KDTIQNLQLL (101 aa)). A compositionally biased stretch (polar residues) spans 990 to 999 (PRTSESQSQP). A disordered region spans residues 990-1012 (PRTSESQSQPVPLKAPCINGDTT).

It is found in the cytoplasm. Its subcellular location is the cell cortex. Functionally, functions as a Ras GTPase-activating protein. Plays an important role in the expansion and functions of natural killer T (NKT) cells in the liver by negatively regulating RAS activity and the down-stream ERK signaling pathway. The polypeptide is RAS protein activator like-3 (RASAL3) (Bos taurus (Bovine)).